A 417-amino-acid polypeptide reads, in one-letter code: MDALINLKDCKEYMTITFCNQEHQIKLAGTVDTPYFCGKDVCKVLGYKDIKDALKKHVDREDKLPLSEIKKVGGTAPPTFLGQTYAYLSHNDGRAVYISEGGLYSLIMSSEAPFAKDFRRLVCNVILPSIRKFGSYSIEQQLSSAMEQLALKDKSEQELQFQLKQEREEKENAYIKLRSETKRLKQQIKRTLEFNQATKQIEPLEYIYICTTEYYQQQHKFKVGGVQTFDLLKSRLTQYNSGESDSEAHFFIYIRKTVNYRSIEHAIKGLLSGFRENQSNELYIMHYDWLVKFVDAIMDGNAEFALLVNNNREQIAEDTINKEPTIVPPIQLEQIMYHRAGDNPRDLTSILDSETKRAIQDAIDSFEPYNNTVKRREFEEHLLKQSPNIKLEGKKRNAWDIARAMGSTKNPMWRYKY.

The 131-residue stretch at 4-134 (LINLKDCKEY…VILPSIRKFG (131 aa)) folds into the Bro-N domain. A coiled-coil region spans residues 152–193 (KDKSEQELQFQLKQEREEKENAYIKLRSETKRLKQQIKRTLE).

The protein belongs to the IIV-6 201R/289L family.

The polypeptide is Putative Bro-N domain-containing protein 289L (Invertebrate iridescent virus 6 (IIV-6)).